The chain runs to 89 residues: Large ribosomal subunit protein bL27 (89 aa).

Residues 1 to 21 form a disordered region; that stretch reads MAHKKAGGSSRNGRDSQSKRL.

This sequence belongs to the bacterial ribosomal protein bL27 family.

The sequence is that of Large ribosomal subunit protein bL27 from Rhizobium rhizogenes (strain K84 / ATCC BAA-868) (Agrobacterium radiobacter).